Reading from the N-terminus, the 252-residue chain is Imidazole glycerol phosphate synthase subunit HisF (252 aa).

Residues D11 and D130 contribute to the active site.

The protein belongs to the HisA/HisF family. As to quaternary structure, heterodimer of HisH and HisF.

It localises to the cytoplasm. It catalyses the reaction 5-[(5-phospho-1-deoxy-D-ribulos-1-ylimino)methylamino]-1-(5-phospho-beta-D-ribosyl)imidazole-4-carboxamide + L-glutamine = D-erythro-1-(imidazol-4-yl)glycerol 3-phosphate + 5-amino-1-(5-phospho-beta-D-ribosyl)imidazole-4-carboxamide + L-glutamate + H(+). Its pathway is amino-acid biosynthesis; L-histidine biosynthesis; L-histidine from 5-phospho-alpha-D-ribose 1-diphosphate: step 5/9. In terms of biological role, IGPS catalyzes the conversion of PRFAR and glutamine to IGP, AICAR and glutamate. The HisF subunit catalyzes the cyclization activity that produces IGP and AICAR from PRFAR using the ammonia provided by the HisH subunit. The protein is Imidazole glycerol phosphate synthase subunit HisF of Bacillus cereus (strain ATCC 10987 / NRS 248).